The following is a 368-amino-acid chain: MTQPVMNPENYQVQLDEKTEALSAMFSEFDVPELEVFSSPAENYRMRAEFRIWHEGDDMYYVMFDQKTKEKYRVDYFLPATRLINDLMPLLAEAIKGSKTLRYKMFQVDFLSTLSGEILVSMLYHRQLDDAWKEEAAVLKQQLNEKGFNLNLIGRARKMKIVLDQEFVIEKLKVNDDILTYKQVENSFTQPNGVVAQKMLEWAVDCTQDSQGDLLELYCGNGNFSLALAKNFDRVLATELAKPSVESAQYNIAANNIDNVQIVRMSAEDFTDAMEGKREFRRLKDQNVDLKSYNCNTIFVDPPRSGMDEGTCKMVQGYERIMYISCNPDTLKENLAILSKTHNITRFALFDQFPYTHHMEAGIFLERK.

Positions 190, 218, 223, 239, and 301 each coordinate S-adenosyl-L-methionine. Catalysis depends on Cys326, which acts as the Nucleophile. The active-site Proton acceptor is Glu360.

It belongs to the class I-like SAM-binding methyltransferase superfamily. RNA M5U methyltransferase family. TrmA subfamily.

It catalyses the reaction uridine(54) in tRNA + S-adenosyl-L-methionine = 5-methyluridine(54) in tRNA + S-adenosyl-L-homocysteine + H(+). It carries out the reaction uridine(341) in tmRNA + S-adenosyl-L-methionine = 5-methyluridine(341) in tmRNA + S-adenosyl-L-homocysteine + H(+). Dual-specificity methyltransferase that catalyzes the formation of 5-methyluridine at position 54 (m5U54) in all tRNAs, and that of position 341 (m5U341) in tmRNA (transfer-mRNA). The sequence is that of tRNA/tmRNA (uracil-C(5))-methyltransferase from Aliivibrio salmonicida (strain LFI1238) (Vibrio salmonicida (strain LFI1238)).